Consider the following 298-residue polypeptide: Deoxyuridine 5'-triphosphate nucleotidohydrolase (298 aa).

180–182 (RSG) contributes to the substrate binding site.

The protein belongs to the dUTPase family. The cofactor is Mg(2+).

It carries out the reaction dUTP + H2O = dUMP + diphosphate + H(+). Its function is as follows. Involved in nucleotide metabolism: produces dUMP, the immediate precursor of thymidine nucleotides and decreases the intracellular concentration of dUTP to avoid uracil incorporation into viral DNA. In Alcelaphine herpesvirus 1 (strain C500) (AlHV-1), this protein is Deoxyuridine 5'-triphosphate nucleotidohydrolase.